Here is a 698-residue protein sequence, read N- to C-terminus: Serotransferrin (698 aa).

The first 19 residues, 1 to 19, serve as a signal peptide directing secretion; sequence MRLAVGALLVCAVLGLCLA. Transferrin-like domains are found at residues 25-347 and 361-683; these read VRWC…NLRE and VKWC…NLRK. Disulfide bonds link Cys28–Cys67 and Cys38–Cys58. At Arg42 the chain carries Dimethylated arginine. O-linked (GalNAc...) serine glycosylation is present at Ser51. Fe(3+) is bound by residues Asp82 and Tyr114. 17 disulfide bridges follow: Cys137-Cys213, Cys156-Cys350, Cys177-Cys193, Cys180-Cys196, Cys190-Cys198, Cys246-Cys260, Cys358-Cys615, Cys364-Cys396, Cys374-Cys387, Cys421-Cys693, Cys437-Cys656, Cys469-Cys542, Cys493-Cys684, Cys503-Cys517, Cys514-Cys525, Cys582-Cys596, and Cys634-Cys639. The hydrogencarbonate site is built by Thr139, Arg143, Ala145, and Gly146. A Fe(3+)-binding site is contributed by Tyr207. Residue His268 participates in Fe(3+) binding. Residue Ser389 is modified to Phosphoserine. Residues Asp411 and Tyr445 each contribute to the Fe(3+) site. 4 residues coordinate hydrogencarbonate: Thr471, Arg475, Ala477, and Gly478. A Fe(3+)-binding site is contributed by Tyr536. His604 contributes to the Fe(3+) binding site. N-linked (GlcNAc...) asparagine glycosylation is present at Asn630. Ser685 is modified (phosphoserine).

This sequence belongs to the transferrin family. As to quaternary structure, monomer. Part of a complex composed of SLC40A1/ferroportin, TF/transferrin and HEPH/hephaestin that transfers iron from cells to transferrin. In terms of tissue distribution, expressed by the liver and secreted in plasma.

The protein localises to the secreted. Functionally, transferrins are iron binding transport proteins which can bind two Fe(3+) ions in association with the binding of an anion, usually bicarbonate. It is responsible for the transport of iron from sites of absorption and heme degradation to those of storage and utilization. Serum transferrin may also have a further role in stimulating cell proliferation. In Pan troglodytes (Chimpanzee), this protein is Serotransferrin (TF).